A 141-amino-acid chain; its full sequence is Bombinins BLP-7/H-BO (141 aa).

A signal peptide spans 1–18 (MNFKYIIAVSFLIASTYA). Positions 19-43 (RSVKNDEQSLSQRDVLDEESLREIR) are excised as a propeptide. N70 carries the post-translational modification Asparagine amide. Residues 74–123 (TAEEHEVMKRLEAVMRDLDSLDHPEEASEKETRGFNQEEIANLFTKKEKR) constitute a propeptide that is removed on maturation. Leucine amide is present on L140.

It belongs to the bombinin family. As to expression, expressed by the skin glands.

Its subcellular location is the secreted. Functionally, antimicrobial peptide with activity against Gram-positive and -negative bacteria and fungi. Shows activity against P.acnes (MIC=5 uM), E.coli (MIC=5-6.3 uM), S.aureus (MIC=5-6.3 uM), M.luteus, S.cerevisiae and C.albicans (MIC=10-12.5 uM). Also reduces the production of interleukin (IL)-8 and granulocyte-macrophage colony stimulating factor (CSF2) in normal human epidermal keratinocytes (NHEKs). Shows anticancer activity against three human hepatoma cell lines. In vivo, using the rat ear edema model, suppress P.acnes-induced skin inflammation, significantly reducing the ear thickness. Shows weak hemolytic activity against human erythrocytes. In terms of biological role, shows weak antimicrobial activity (tested on E.coli, S.aureus and C.albicans). Shows high hemolytic activity against human erythrocytes (38% erythrocyte lysis at 80.0 uM, and up to 85% at 159.7 uM). This is Bombinins BLP-7/H-BO from Bombina orientalis (Oriental fire-bellied toad).